A 221-amino-acid chain; its full sequence is Early nodulin-like protein 4 (221 aa).

An N-terminal signal peptide occupies residues M1–F21. Positions H29–S130 constitute a Phytocyanin domain. N59 and N85 each carry an N-linked (GlcNAc...) asparagine glycan. A disulfide bridge links C84 with C118. Residues S130 to L185 form a disordered region. A lipid anchor (GPI-anchor amidated asparagine) is attached at N197. Positions L198 to V221 are cleaved as a propeptide — removed in mature form.

This sequence belongs to the early nodulin-like (ENODL) family. Confined to flowers.

It is found in the cell membrane. May act as a carbohydrate transporter. This Arabidopsis thaliana (Mouse-ear cress) protein is Early nodulin-like protein 4.